Here is a 106-residue protein sequence, read N- to C-terminus: ATP-dependent Clp protease adapter protein ClpS (106 aa).

This sequence belongs to the ClpS family. In terms of assembly, binds to the N-terminal domain of the chaperone ClpA.

Functionally, involved in the modulation of the specificity of the ClpAP-mediated ATP-dependent protein degradation. The protein is ATP-dependent Clp protease adapter protein ClpS of Nocardia farcinica (strain IFM 10152).